We begin with the raw amino-acid sequence, 62 residues long: Synergistic-type venom protein C8S2, chain 1 (62 aa).

Disulfide bonds link C3/C24, C17/C42, and C46/C57.

Belongs to the three-finger toxin family. Short-chain subfamily. Aminergic toxin sub-subfamily. As to quaternary structure, heterodimer of C8S2 chain 1 and chain 2 (AC P01411); disulfide-linked. In terms of tissue distribution, expressed by the venom gland.

It localises to the secreted. In terms of biological role, this protein shows a synergetic toxic effect in that it enhances the toxicity of other toxins. The polypeptide is Synergistic-type venom protein C8S2, chain 1 (Dendroaspis angusticeps (Eastern green mamba)).